A 318-amino-acid polypeptide reads, in one-letter code: MLSDFYKYATSTQLDLICTQLINLSTHVFNTNNGNIPKWEQAIKQIKTQNTGSLDFITPYLNISAHHINNFTLEKSLKQLIPWRKGPYQIGDLQLDSEWRGDMKWHRLIPHIKPLKDKVVLDVGSGNGYFTYLMAISGAKIALGIEPFLLFNYQFQAIRTLINNLPNVFVLPLSLDKIPKKPLFDTVFSMGVLYHQKDYELHLNQLKDVMKPSGELILETLIIDLEKVKKIIPKGRYAKMRNVYCLPSKNTLRTWLEDAEFKNIKLLDVTKTTSKEQRATHWIGNNTQSLKNFLDPNNRDLTIEGFPAPKRAIFICQK.

Carboxy-S-adenosyl-L-methionine contacts are provided by residues K85, W99, K104, G124, 175-176 (LD), M190, Y194, and R311.

The protein belongs to the class I-like SAM-binding methyltransferase superfamily. CmoB family. In terms of assembly, homotetramer.

It catalyses the reaction carboxy-S-adenosyl-L-methionine + 5-hydroxyuridine(34) in tRNA = 5-carboxymethoxyuridine(34) in tRNA + S-adenosyl-L-homocysteine + H(+). Its function is as follows. Catalyzes carboxymethyl transfer from carboxy-S-adenosyl-L-methionine (Cx-SAM) to 5-hydroxyuridine (ho5U) to form 5-carboxymethoxyuridine (cmo5U) at position 34 in tRNAs. The chain is tRNA U34 carboxymethyltransferase from Ruthia magnifica subsp. Calyptogena magnifica.